The following is a 360-amino-acid chain: Phosphate acyltransferase (360 aa).

Belongs to the PlsX family. In terms of assembly, homodimer. Probably interacts with PlsY.

It is found in the cytoplasm. It catalyses the reaction a fatty acyl-[ACP] + phosphate = an acyl phosphate + holo-[ACP]. It functions in the pathway lipid metabolism; phospholipid metabolism. In terms of biological role, catalyzes the reversible formation of acyl-phosphate (acyl-PO(4)) from acyl-[acyl-carrier-protein] (acyl-ACP). This enzyme utilizes acyl-ACP as fatty acyl donor, but not acyl-CoA. This chain is Phosphate acyltransferase, found in Janthinobacterium sp. (strain Marseille) (Minibacterium massiliensis).